The chain runs to 96 residues: Glutamyl-tRNA(Gln) amidotransferase subunit C (96 aa).

This sequence belongs to the GatC family. In terms of assembly, heterotrimer of A, B and C subunits.

It carries out the reaction L-glutamyl-tRNA(Gln) + L-glutamine + ATP + H2O = L-glutaminyl-tRNA(Gln) + L-glutamate + ADP + phosphate + H(+). It catalyses the reaction L-aspartyl-tRNA(Asn) + L-glutamine + ATP + H2O = L-asparaginyl-tRNA(Asn) + L-glutamate + ADP + phosphate + 2 H(+). In terms of biological role, allows the formation of correctly charged Asn-tRNA(Asn) or Gln-tRNA(Gln) through the transamidation of misacylated Asp-tRNA(Asn) or Glu-tRNA(Gln) in organisms which lack either or both of asparaginyl-tRNA or glutaminyl-tRNA synthetases. The reaction takes place in the presence of glutamine and ATP through an activated phospho-Asp-tRNA(Asn) or phospho-Glu-tRNA(Gln). The sequence is that of Glutamyl-tRNA(Gln) amidotransferase subunit C from Deinococcus radiodurans (strain ATCC 13939 / DSM 20539 / JCM 16871 / CCUG 27074 / LMG 4051 / NBRC 15346 / NCIMB 9279 / VKM B-1422 / R1).